A 57-amino-acid polypeptide reads, in one-letter code: Small ribosomal subunit protein bS21 (57 aa).

This sequence belongs to the bacterial ribosomal protein bS21 family.

The sequence is that of Small ribosomal subunit protein bS21 from Bacillus pumilus (strain SAFR-032).